Consider the following 517-residue polypeptide: MAVNLVLSFALAILISSSPTAVGVDATEELKEAVLTLDAGNFSEVVAKHPFIVVKFYAPWCGHCKQLAPEYEKAASILRKNELPVVLAKVDAYNERNKELKDKYGVYSYPTIKIMKNGGSDVRGYGGPREADGIVEYLKRQVGPASLKLESAEEAAHSVVDKGVILVGVFPEFAGMEYENFMVVAEKMRADYDFFHTSDASILPRGDQSVKGPIVRLFKPFDELFVDSEDFGKDALEKFIEVSGFPMVVTYDADPTNHKFLERYYSTPSSKAMLFVSFGDDRIESFKSQIHEAARKFSGNNISFLIGDVADADRVFQYFGLRESDVPLLFVIASTGKYLNPTMDPDQIIPWLKQYIVEYGNLTPYVKSEPIPKVNDQPVKVVVADNIDDIVFNSGKNVLLEFYAPWCGHCRKFALILEEIAVSLQDDQDIVIAKMDGTVNDIPTDFTVEGYPTIYFYSSSGNLLSYDGARTAEEIISFINENRGPKAGAAAAVDEKTQIDAVEEEVTSSSEPVKDEL.

The signal sequence occupies residues 1 to 23 (MAVNLVLSFALAILISSSPTAVG). Residues 24 to 143 (VDATEELKEA…IVEYLKRQVG (120 aa)) form the Thioredoxin 1 domain. Asparagine 41 is a glycosylation site (N-linked (GlcNAc...) asparagine). Catalysis depends on nucleophile residues cysteine 61 and cysteine 64. The cysteines at positions 61 and 64 are disulfide-linked. Asparagine 301 carries N-linked (GlcNAc...) asparagine glycosylation. One can recognise a Thioredoxin 2 domain in the interval 357–484 (VEYGNLTPYV…IISFINENRG (128 aa)). Active-site nucleophile residues include cysteine 407 and cysteine 410. A disulfide bridge links cysteine 407 with cysteine 410. Positions 514-517 (KDEL) match the Prevents secretion from ER motif.

It belongs to the protein disulfide isomerase family.

Its subcellular location is the endoplasmic reticulum lumen. The catalysed reaction is Catalyzes the rearrangement of -S-S- bonds in proteins.. Its function is as follows. Acts as a protein-folding catalyst that interacts with nascent polypeptides to catalyze the formation, isomerization, and reduction or oxidation of disulfide bonds. May play a role in storage protein biogenesis. This is Protein disulfide isomerase-like 1-2 (PDIL1-2) from Oryza sativa subsp. japonica (Rice).